Here is a 446-residue protein sequence, read N- to C-terminus: Maltoporin (446 aa).

The signal sequence occupies residues 1-25 (MMITLRKLPLAVAVAAGVMSAQAMA).

Belongs to the porin LamB (TC 1.B.3) family. Homotrimer formed of three 18-stranded antiparallel beta-barrels, containing three independent channels.

It localises to the cell outer membrane. The catalysed reaction is beta-maltose(in) = beta-maltose(out). In terms of biological role, involved in the transport of maltose and maltodextrins. In Escherichia coli O127:H6 (strain E2348/69 / EPEC), this protein is Maltoporin.